The primary structure comprises 208 residues: Uracil phosphoribosyltransferase (208 aa).

Residues Arg78, Arg103, and 130–138 each bind 5-phospho-alpha-D-ribose 1-diphosphate; that span reads DPMLATGGS. Uracil-binding positions include Ile193 and 198–200; that span reads GDA. A 5-phospho-alpha-D-ribose 1-diphosphate-binding site is contributed by Asp199.

The protein belongs to the UPRTase family. Requires Mg(2+) as cofactor.

The enzyme catalyses UMP + diphosphate = 5-phospho-alpha-D-ribose 1-diphosphate + uracil. The protein operates within pyrimidine metabolism; UMP biosynthesis via salvage pathway; UMP from uracil: step 1/1. With respect to regulation, allosterically activated by GTP. Catalyzes the conversion of uracil and 5-phospho-alpha-D-ribose 1-diphosphate (PRPP) to UMP and diphosphate. The polypeptide is Uracil phosphoribosyltransferase (Vibrio parahaemolyticus serotype O3:K6 (strain RIMD 2210633)).